The sequence spans 320 residues: Ferrochelatase (320 aa).

2 residues coordinate Fe cation: histidine 194 and glutamate 272.

Belongs to the ferrochelatase family.

Its subcellular location is the cytoplasm. The enzyme catalyses heme b + 2 H(+) = protoporphyrin IX + Fe(2+). The protein operates within porphyrin-containing compound metabolism; protoheme biosynthesis; protoheme from protoporphyrin-IX: step 1/1. Functionally, catalyzes the ferrous insertion into protoporphyrin IX. This is Ferrochelatase from Desulfotalea psychrophila (strain LSv54 / DSM 12343).